A 664-amino-acid polypeptide reads, in one-letter code: Peroxisomal acyl-coenzyme A oxidase 1 (664 aa).

FAD contacts are provided by Tyr-135, Gln-137, Thr-138, Ser-144, Gly-177, Arg-310, Gln-330, Arg-333, Gly-401, and Thr-422. The active-site Proton acceptor is the Glu-424. Asp-426 is a binding site for FAD. Cys-467 and Cys-576 are oxidised to a cystine. The short motif at 662–664 (ARL) is the Microbody targeting signal element.

The protein belongs to the acyl-CoA oxidase family. In terms of assembly, homodimer. FAD is required as a cofactor. In terms of tissue distribution, expressed mainly in flowers and young seedlings. Lower expression in roots, leaves and bracts.

The protein resides in the peroxisome. The enzyme catalyses a 2,3-saturated acyl-CoA + O2 = a (2E)-enoyl-CoA + H2O2. Its function is as follows. Catalyzes the desaturation of both long- and medium-chain acyl-CoAs to 2-trans-enoyl-CoAs. Most active with C14-CoA. Activity on long-chain mono-unsaturated substrates is 40% higher than with the corresponding saturated substrates. Seems to be an important factor in the general metabolism of root tips. May be involved in the biosynthesis of jasmonic acid. The chain is Peroxisomal acyl-coenzyme A oxidase 1 from Arabidopsis thaliana (Mouse-ear cress).